The following is a 32-amino-acid chain: Delta-conotoxin-like CnVIB (32 aa).

Disulfide bonds link cysteine 3–cysteine 18, cysteine 10–cysteine 22, and cysteine 17–cysteine 27. Residues proline 6 and proline 14 each carry the 4-hydroxyproline modification.

It belongs to the conotoxin O1 superfamily. As to expression, expressed by the venom duct.

It is found in the secreted. In terms of biological role, delta-conotoxins bind to site 6 of voltage-gated sodium channels (Nav) and inhibit the inactivation process. This toxin acts on Nav1.4/SCN4A and Nav1.6/SCN8A (EC(50)=2.3 uM). The polypeptide is Delta-conotoxin-like CnVIB (Conus consors (Singed cone)).